The chain runs to 382 residues: 1-deoxy-D-xylulose 5-phosphate reductoisomerase (382 aa).

Threonine 10, glycine 11, serine 12, isoleucine 13, glycine 36, and asparagine 122 together coordinate NADPH. Position 123 (lysine 123) interacts with 1-deoxy-D-xylulose 5-phosphate. Glutamate 124 is a binding site for NADPH. Aspartate 148 is a Mn(2+) binding site. 4 residues coordinate 1-deoxy-D-xylulose 5-phosphate: serine 149, glutamate 150, serine 174, and histidine 197. Glutamate 150 provides a ligand contact to Mn(2+). Residue glycine 203 participates in NADPH binding. Residues serine 210, asparagine 215, lysine 216, and glutamate 219 each contribute to the 1-deoxy-D-xylulose 5-phosphate site. Glutamate 219 is a Mn(2+) binding site.

It belongs to the DXR family. Mg(2+) serves as cofactor. It depends on Mn(2+) as a cofactor.

The catalysed reaction is 2-C-methyl-D-erythritol 4-phosphate + NADP(+) = 1-deoxy-D-xylulose 5-phosphate + NADPH + H(+). It participates in isoprenoid biosynthesis; isopentenyl diphosphate biosynthesis via DXP pathway; isopentenyl diphosphate from 1-deoxy-D-xylulose 5-phosphate: step 1/6. Its function is as follows. Catalyzes the NADPH-dependent rearrangement and reduction of 1-deoxy-D-xylulose-5-phosphate (DXP) to 2-C-methyl-D-erythritol 4-phosphate (MEP). This is 1-deoxy-D-xylulose 5-phosphate reductoisomerase from Pelodictyon phaeoclathratiforme (strain DSM 5477 / BU-1).